Here is a 466-residue protein sequence, read N- to C-terminus: Cysteine--tRNA ligase (466 aa).

Position 29 (Cys-29) interacts with Zn(2+). The 'HIGH' region signature appears at 31 to 41 (PTVYNYIHIGN). Positions 209, 234, and 238 each coordinate Zn(2+). Residues 266 to 270 (KMSKS) carry the 'KMSKS' region motif. Residue Lys-269 participates in ATP binding. Phosphoserine is present on Ser-270.

Belongs to the class-I aminoacyl-tRNA synthetase family. As to quaternary structure, monomer. Zn(2+) serves as cofactor.

It localises to the cytoplasm. It catalyses the reaction tRNA(Cys) + L-cysteine + ATP = L-cysteinyl-tRNA(Cys) + AMP + diphosphate. The chain is Cysteine--tRNA ligase from Bacillus pumilus (strain SAFR-032).